The sequence spans 78 residues: MEFKNQVYGIIAEVCQDDVVKENPEIAIFDEGLLDSFGTVELLMAIESQLGITVPITEFDRDVWDTPNHIAEQLAEMK.

A Carrier domain is found at 1–78; the sequence is MEFKNQVYGI…HIAEQLAEMK (78 aa). O-(pantetheine 4'-phosphoryl)serine is present on Ser36.

The protein belongs to the DltC family. In terms of processing, 4'-phosphopantetheine is transferred from CoA to a specific serine of apo-DCP.

It localises to the cytoplasm. Its pathway is cell wall biogenesis; lipoteichoic acid biosynthesis. Its function is as follows. Carrier protein involved in the D-alanylation of lipoteichoic acid (LTA). The loading of thioester-linked D-alanine onto DltC is catalyzed by D-alanine--D-alanyl carrier protein ligase DltA. The DltC-carried D-alanyl group is further transferred to cell membrane phosphatidylglycerol (PG) by forming an ester bond, probably catalyzed by DltD. D-alanylation of LTA plays an important role in modulating the properties of the cell wall in Gram-positive bacteria, influencing the net charge of the cell wall. This is D-alanyl carrier protein from Bacillus pumilus (strain SAFR-032).